The sequence spans 104 residues: Small ribosomal subunit protein uS10 (104 aa).

It belongs to the universal ribosomal protein uS10 family. As to quaternary structure, part of the 30S ribosomal subunit.

In terms of biological role, involved in the binding of tRNA to the ribosomes. This is Small ribosomal subunit protein uS10 from Ralstonia nicotianae (strain ATCC BAA-1114 / GMI1000) (Ralstonia solanacearum).